A 493-amino-acid chain; its full sequence is Fizzy-related protein homolog (493 aa).

3 disordered regions span residues 31 to 51 (LTPANSPVSSPSKHGDRFIPS), 64 to 88 (INENEKSPSQNRKAKDATSDNGKDG), and 105 to 166 (EKVQ…SPRK). A Phosphothreonine modification is found at Thr-32. Residues 32–42 (TPANSPVSSPS) show a composition bias toward polar residues. Residue Ser-36 is modified to Phosphoserine. Lys-69 is subject to N6-acetyllysine. Basic and acidic residues-rich tracts occupy residues 76–86 (KAKDATSDNGK) and 106–126 (KVQDPQTEDRRLQPSTPEHKG). Residues Ser-133, Ser-138, Ser-146, and Ser-151 each carry the phosphoserine modification. Residues 146–160 (SPYSLSPVSNKSQKL) are compositionally biased toward polar residues. Lys-159 is modified (N6-acetyllysine). 7 WD repeats span residues 182–222 (PELQ…VTRL), 227–266 (VEGDSVTSVGWSERGNLVAVGTHKGFVQIWDAAAGKKLSM), 269–306 (GHTARVGALAWNADQLSSGSRDRMILQRDIRTPPLQSE), 311–350 (GHRQEVCGLKWSTDHQLLASGGNDNKLLVWNHSSLSPVQQ), 353–395 (EHLA…PLQC), 397–438 (DTGS…QVAK), and 441–480 (GHSYRVLYLAMSPDGEAIVTGAGDETLRFWNVFSKTRSTK).

This sequence belongs to the WD repeat CDC20/Fizzy family. In terms of assembly, the unphosphorylated form interacts with APC/C during mitosis. Interacts with NINL. Interacts (in complex with the anaphase promoting complex APC) with MAD2L2; inhibits FZR1-mediated APC/C activation. Interacts with SIRT2. Interacts with USP37. Interacts (via WD repeats) with MAK. Interacts with RBBP8/CtIP; this interaction leads to RBBP8 proteasomal degradation. Interacts with HECW2. Interacts with SASS6; the interaction is regulated by CENATAC and leads to SASS6 proteasomal degradation. Interacts (via N-terminus) with CCNF. Interacts with CDC6. Interacts with TK1 (via the KEN box). Post-translationally, acetylated. Deacetylated by SIRT2 at Lys-69 and Lys-159; deacetylation enhances the interaction of FZR1 with CDC27, leading to activation of anaphase promoting complex/cyclosome (APC/C). In terms of processing, following DNA damage, it is dephosphorylated by CDC14B in G2 phase, leading to its reassociation with the APC/C, and allowing an efficient G2 DNA damage checkpoint. Phosphorylated by MAK.

Its pathway is protein modification; protein ubiquitination. Its function is as follows. Substrate-specific adapter for the anaphase promoting complex/cyclosome (APC/C) E3 ubiquitin-protein ligase complex. Associates with the APC/C in late mitosis, in replacement of CDC20, and activates the APC/C during anaphase and telophase. The APC/C remains active in degrading substrates to ensure that positive regulators of the cell cycle do not accumulate prematurely. At the G1/S transition FZR1 is phosphorylated, leading to its dissociation from the APC/C. Following DNA damage, it is required for the G2 DNA damage checkpoint: its dephosphorylation and reassociation with the APC/C leads to the ubiquitination of PLK1, preventing entry into mitosis. Acts as an adapter for APC/C to target the DNA-end resection factor RBBP8/CtIP for ubiquitination and subsequent proteasomal degradation. Through the regulation of RBBP8/CtIP protein turnover, may play a role in DNA damage response, favoring DNA double-strand repair through error-prone non-homologous end joining (NHEJ) over error-free, RBBP8-mediated homologous recombination (HR). The sequence is that of Fizzy-related protein homolog (Fzr1) from Mus musculus (Mouse).